A 542-amino-acid polypeptide reads, in one-letter code: Mitogen-activated protein kinase 14 (542 aa).

In terms of domain architecture, Protein kinase spans 13-304; sequence YKIEEVIGKG…AEEALADPYF (292 aa). Residues 19 to 27 and Lys-42 each bind ATP; that span reads IGKGSYGVV. The active-site Proton acceptor is Asp-139. Thr-175 is subject to Phosphothreonine. Residues 175–177 carry the TXY motif; the sequence is TDY. Phosphotyrosine is present on Tyr-177. Disordered regions lie at residues 388 to 412 and 482 to 542; these read STAAPPERQHNSLPRPCVVYSDNRP and RNPA…SGHW. Residues 488 to 507 show a composition bias toward polar residues; sequence PNSSVPLGSSYPRRNQTCKS.

Belongs to the protein kinase superfamily. CMGC Ser/Thr protein kinase family. MAP kinase subfamily. In terms of processing, dually phosphorylated on Thr-175 and Tyr-177, which activates the enzyme.

It carries out the reaction L-seryl-[protein] + ATP = O-phospho-L-seryl-[protein] + ADP + H(+). The catalysed reaction is L-threonyl-[protein] + ATP = O-phospho-L-threonyl-[protein] + ADP + H(+). Its activity is regulated as follows. Activated by threonine and tyrosine phosphorylation. The polypeptide is Mitogen-activated protein kinase 14 (MPK14) (Oryza sativa subsp. japonica (Rice)).